A 333-amino-acid chain; its full sequence is BRISC and BRCA1-A complex member 1 (333 aa).

At Met-1 the chain carries N-acetylmethionine. The disordered stretch occupies residues 1–85; it reads MEVAEANSPT…PWQVPASASE (85 aa). Ser-8 is subject to Phosphoserine. Residues 10 to 24 are compositionally biased toward acidic residues; the sequence is TEEEEEEEEEGEETI. Residues Ser-33 and Ser-53 each carry the phosphoserine modification. Residues 58–67 are compositionally biased toward low complexity; the sequence is EAATADGGAA. The VWFA-like stretch occupies residues 99-302; sequence VIICLDLSEE…LELHNCMAKL (204 aa).

It belongs to the BABAM1 family. As to quaternary structure, component of the ARISC complex, at least composed of UIMC1/RAP80, ABRAXAS1, BRCC3/BRCC36, BABAM2 and BABAM1/NBA1. Component of the BRCA1-A complex, at least composed of BRCA1, BARD1, UIMC1/RAP80, ABRAXAS1, BRCC3/BRCC36, BABAM2 and BABAM1/NBA1. In the BRCA1-A complex, interacts directly with ABRAXAS1 and BABAM2. Component of the BRISC complex, at least composed of ABRAXAS2, BRCC3/BRCC36, BABAM2 and BABAM1/NBA1. Identified in a complex with SHMT2 and the other subunits of the BRISC complex.

It localises to the cytoplasm. It is found in the nucleus. Functionally, component of the BRCA1-A complex, a complex that specifically recognizes 'Lys-63'-linked ubiquitinated histones H2A and H2AX at DNA lesions sites, leading to target the BRCA1-BARD1 heterodimer to sites of DNA damage at double-strand breaks (DSBs). The BRCA1-A complex also possesses deubiquitinase activity that specifically removes 'Lys-63'-linked ubiquitin on histones H2A and H2AX. In the BRCA1-A complex, it is required for the complex integrity and its localization at DSBs. Component of the BRISC complex, a multiprotein complex that specifically cleaves 'Lys-63'-linked ubiquitin in various substrates. In these 2 complexes, it is probably required to maintain the stability of BABAM2 and help the 'Lys-63'-linked deubiquitinase activity mediated by BRCC3/BRCC36 component. The BRISC complex is required for normal mitotic spindle assembly and microtubule attachment to kinetochores via its role in deubiquitinating NUMA1. Plays a role in interferon signaling via its role in the deubiquitination of the interferon receptor IFNAR1; deubiquitination increases IFNAR1 activity by enhancing its stability and cell surface expression. Down-regulates the response to bacterial lipopolysaccharide (LPS) via its role in IFNAR1 deubiquitination. The polypeptide is BRISC and BRCA1-A complex member 1 (Babam1) (Mus musculus (Mouse)).